The chain runs to 797 residues: Hid-1 family protein P27G11.12 (797 aa).

The protein belongs to the hid-1 family.

The protein resides in the cytoplasm. Its subcellular location is the nucleus. The polypeptide is Hid-1 family protein P27G11.12 (Schizosaccharomyces pombe (strain 972 / ATCC 24843) (Fission yeast)).